The sequence spans 116 residues: Large ribosomal subunit protein bL19 (116 aa).

It belongs to the bacterial ribosomal protein bL19 family.

In terms of biological role, this protein is located at the 30S-50S ribosomal subunit interface and may play a role in the structure and function of the aminoacyl-tRNA binding site. In Flavobacterium psychrophilum (strain ATCC 49511 / DSM 21280 / CIP 103535 / JIP02/86), this protein is Large ribosomal subunit protein bL19.